The chain runs to 350 residues: Probable dual-specificity RNA methyltransferase RlmN (350 aa).

Positions 105 to 342 constitute a Radical SAM core domain; sequence ANGKNSVCIS…VRQSKGANIN (238 aa). Cysteines 112 and 345 form a disulfide. [4Fe-4S] cluster is bound by residues cysteine 119, cysteine 123, and cysteine 126. Residues 166–167, serine 198, 221–223, and asparagine 302 contribute to the S-adenosyl-L-methionine site; these read GE and SLH. The S-methylcysteine intermediate role is filled by cysteine 345.

It belongs to the radical SAM superfamily. RlmN family. The cofactor is [4Fe-4S] cluster.

The protein localises to the cytoplasm. The catalysed reaction is adenosine(2503) in 23S rRNA + 2 reduced [2Fe-2S]-[ferredoxin] + 2 S-adenosyl-L-methionine = 2-methyladenosine(2503) in 23S rRNA + 5'-deoxyadenosine + L-methionine + 2 oxidized [2Fe-2S]-[ferredoxin] + S-adenosyl-L-homocysteine. It catalyses the reaction adenosine(37) in tRNA + 2 reduced [2Fe-2S]-[ferredoxin] + 2 S-adenosyl-L-methionine = 2-methyladenosine(37) in tRNA + 5'-deoxyadenosine + L-methionine + 2 oxidized [2Fe-2S]-[ferredoxin] + S-adenosyl-L-homocysteine. Specifically methylates position 2 of adenine 2503 in 23S rRNA and position 2 of adenine 37 in tRNAs. The chain is Probable dual-specificity RNA methyltransferase RlmN from Endomicrobium trichonymphae.